The primary structure comprises 131 residues: D-ribose pyranase (131 aa).

The active-site Proton donor is His20. Substrate-binding positions include Asp28, His98, and Tyr120–Asn122.

It belongs to the RbsD / FucU family. RbsD subfamily. As to quaternary structure, homodecamer.

The protein localises to the cytoplasm. The enzyme catalyses beta-D-ribopyranose = beta-D-ribofuranose. It participates in carbohydrate metabolism; D-ribose degradation; D-ribose 5-phosphate from beta-D-ribopyranose: step 1/2. Its function is as follows. Catalyzes the interconversion of beta-pyran and beta-furan forms of D-ribose. This chain is D-ribose pyranase, found in Bacillus cereus (strain G9842).